Here is a 338-residue protein sequence, read N- to C-terminus: Glycerol-3-phosphate dehydrogenase [NAD(P)+] (338 aa).

The NADPH site is built by serine 14, tyrosine 15, histidine 35, and lysine 109. Residues lysine 109, glycine 138, and threonine 140 each coordinate sn-glycerol 3-phosphate. Alanine 142 contributes to the NADPH binding site. Lysine 194, aspartate 247, serine 257, arginine 258, and asparagine 259 together coordinate sn-glycerol 3-phosphate. The Proton acceptor role is filled by lysine 194. NADPH is bound at residue arginine 258. Positions 282 and 284 each coordinate NADPH.

This sequence belongs to the NAD-dependent glycerol-3-phosphate dehydrogenase family.

The protein localises to the cytoplasm. The catalysed reaction is sn-glycerol 3-phosphate + NAD(+) = dihydroxyacetone phosphate + NADH + H(+). The enzyme catalyses sn-glycerol 3-phosphate + NADP(+) = dihydroxyacetone phosphate + NADPH + H(+). The protein operates within membrane lipid metabolism; glycerophospholipid metabolism. Its function is as follows. Catalyzes the reduction of the glycolytic intermediate dihydroxyacetone phosphate (DHAP) to sn-glycerol 3-phosphate (G3P), the key precursor for phospholipid synthesis. This Shewanella baltica (strain OS195) protein is Glycerol-3-phosphate dehydrogenase [NAD(P)+].